The following is a 442-amino-acid chain: Chromosomal replication initiator protein DnaA (442 aa).

A domain I, interacts with DnaA modulators region spans residues 1-75 (MDAWPRCLER…GNGEVALAVG (75 aa)). A domain II region spans residues 75-104 (GSRPRAPEPAPAPVAATIAPQAAPIAPFAG). Positions 105–322 (NLDSHYTFAN…GALNTLVARA (218 aa)) are domain III, AAA+ region. The ATP site is built by Gly150, Gly152, Lys153, and Thr154. Residues 323-442 (NFTGRSITVE…WEKLIRKLSE (120 aa)) form a domain IV, binds dsDNA region.

It belongs to the DnaA family. In terms of assembly, oligomerizes as a right-handed, spiral filament on DNA at oriC.

Its subcellular location is the cytoplasm. In terms of biological role, plays an essential role in the initiation and regulation of chromosomal replication. ATP-DnaA binds to the origin of replication (oriC) to initiate formation of the DNA replication initiation complex once per cell cycle. Binds the DnaA box (a 9 base pair repeat at the origin) and separates the double-stranded (ds)DNA. Forms a right-handed helical filament on oriC DNA; dsDNA binds to the exterior of the filament while single-stranded (ss)DNA is stabiized in the filament's interior. The ATP-DnaA-oriC complex binds and stabilizes one strand of the AT-rich DNA unwinding element (DUE), permitting loading of DNA polymerase. After initiation quickly degrades to an ADP-DnaA complex that is not apt for DNA replication. Binds acidic phospholipids. The chain is Chromosomal replication initiator protein DnaA from Xanthomonas oryzae pv. oryzae (strain PXO99A).